A 308-amino-acid polypeptide reads, in one-letter code: Ribosomal RNA small subunit methyltransferase H (308 aa).

S-adenosyl-L-methionine contacts are provided by residues 36–38 (GGH), D55, F86, D103, and Q110.

Belongs to the methyltransferase superfamily. RsmH family.

The protein resides in the cytoplasm. The enzyme catalyses cytidine(1402) in 16S rRNA + S-adenosyl-L-methionine = N(4)-methylcytidine(1402) in 16S rRNA + S-adenosyl-L-homocysteine + H(+). Functionally, specifically methylates the N4 position of cytidine in position 1402 (C1402) of 16S rRNA. This chain is Ribosomal RNA small subunit methyltransferase H, found in Helicobacter pylori (strain B38).